We begin with the raw amino-acid sequence, 205 residues long: Ras-related protein rab-6.2 (205 aa).

GTP contacts are provided by residues 18-25 (EQSVGKTS), Thr42, 66-70 (TAGQE), and 124-127 (KTDL). S-geranylgeranyl cysteine attachment occurs at residues Cys203 and Cys205. Cys205 is subject to Cysteine methyl ester.

It belongs to the small GTPase superfamily. Rab family. Interacts with GARP complex component vps-52. Interacts (in GTP-bound form) with lin-10. May interact (in GTP-bound form) with eat-17. Highly expressed in body wall muscles, pharyngeal and vulval muscles, hypodermis, intestine, the gonad, coelomocytes, and neurons, including command interneuron (at protein level). Highly expressed in the terminal bulb muscles.

The protein resides in the perikaryon. It is found in the cell projection. The protein localises to the dendrite. Its subcellular location is the golgi apparatus. It localises to the cytoplasmic vesicle. In terms of biological role, the small GTPases Rab are key regulators of intracellular membrane trafficking, from the formation of transport vesicles to their fusion with membranes. Rabs cycle between an inactive GDP-bound form and an active GTP-bound form that is able to recruit to membranes different set of downstream effectors directly responsible for vesicle formation, movement, tethering and fusion. In its active GTP-bound form, acts redundantly with rab-6.1 (in its active GTP-bound form) to positively regulate the retrograde trafficking of cargo molecules from endosomes to the Golgi compartment. Required for the retrograde trafficking of glr-1, a subunit of AMPA-type glutamate receptors (AMPRs), out of early endosomes and into the Golgi compartment in neurons. Its role in glr-1 trafficking may partly be mediated by its interaction with lin-10 and association with components of the retromer complex such as rme-8. Together with rab-6.2, promotes the retrograde trafficking of mig-14 from endosomes to Golgi structures in the intestine. Plays a role in the epidermis to promote cuticle integrity and impermeability of the cuticle barrier to exogenous molecules. May have a role in the glycosylation of the cuticular surface. Required for seam cell division and alae formation. Required for grinder formation, which is the feeding organ that breaks down food. In contrast to rab-6.1, may play a minor role in the exocytosis of secretory vesicles (cortical granules) during the oocyte-to-embryo transition. This chain is Ras-related protein rab-6.2, found in Caenorhabditis elegans.